A 509-amino-acid polypeptide reads, in one-letter code: Cytochrome P450 monooxygenase aba1 (509 aa).

The first 31 residues, 1-31, serve as a signal peptide directing secretion; it reads MSNSILNLGSFACLLSLGSIVLWYTISAVLA. The N-linked (GlcNAc...) asparagine glycan is linked to Asn402. Cys451 lines the heme pocket. Asn462 carries N-linked (GlcNAc...) asparagine glycosylation.

It belongs to the cytochrome P450 family. Requires heme as cofactor.

It functions in the pathway hormone biosynthesis. Cytochrome P450 monooxygenase; part of the gene cluster that mediates the biosynthesis of abscisic acid (ABA), a phytohormone that acts antagonistically toward salicylic acid (SA), jasmonic acid (JA) and ethylene (ETH) signaling, to impede plant defense responses. The first step of the pathway catalyzes the reaction from farnesyl diphosphate to alpha-ionylideneethane performed by the alpha-ionylideneethane synthase aba3 via a three-step reaction mechanism involving 2 neutral intermediates, beta-farnesene and allofarnesene. The cytochrome P450 monooxygenase aba1 might then be involved in the conversion of alpha-ionylideneethane to alpha-ionylideneacetic acid. Alpha-ionylideneacetic acid is further converted to abscisic acid in 2 steps involving the cytochrome P450 monooxygenase aba2 and the short-chain dehydrogenase/reductase aba4, via the intermediates 1'-deoxy-ABA or 1',4'-trans-diol-ABA, depending on the order of action of these 2 enzymes. Aba2 is responsible for the hydroxylation of carbon atom C-1' and aba4 might be involved in the oxidation of the C-4' carbon atom. The protein is Cytochrome P450 monooxygenase aba1 (aba1) of Botryotinia fuckeliana (strain B05.10) (Noble rot fungus).